We begin with the raw amino-acid sequence, 983 residues long: Glycine dehydrogenase (decarboxylating) (983 aa).

An N6-(pyridoxal phosphate)lysine modification is found at Lys-726.

Belongs to the GcvP family. As to quaternary structure, the glycine cleavage system is composed of four proteins: P, T, L and H. The cofactor is pyridoxal 5'-phosphate.

It carries out the reaction N(6)-[(R)-lipoyl]-L-lysyl-[glycine-cleavage complex H protein] + glycine + H(+) = N(6)-[(R)-S(8)-aminomethyldihydrolipoyl]-L-lysyl-[glycine-cleavage complex H protein] + CO2. The glycine cleavage system catalyzes the degradation of glycine. The P protein binds the alpha-amino group of glycine through its pyridoxal phosphate cofactor; CO(2) is released and the remaining methylamine moiety is then transferred to the lipoamide cofactor of the H protein. The sequence is that of Glycine dehydrogenase (decarboxylating) from Synechocystis sp. (strain ATCC 27184 / PCC 6803 / Kazusa).